We begin with the raw amino-acid sequence, 803 residues long: Bromodomain-containing protein 2 (803 aa).

M1 is modified (N-acetylmethionine). The tract at residues 1 to 28 is disordered; that stretch reads MLQNVTPHSKLPGEGNAGLLGLGPEAAA. The residue at position 6 (T6) is a Phosphothreonine. Residue S37 is modified to Phosphoserine. The segment at 53-73 is disordered; it reads ALQLTPANPPPPEVSNPKKPG. Positions 74–180 constitute a Bromo 1 domain; that stretch reads RVTNQLQYLH…KIFLQKVASM (107 aa). Residues D112, Y155, N156, K157, D160, and D161 each coordinate a protein. Disordered stretches follow at residues 268-349, 456-653, and 739-803; these read PPAQ…LSEQ, EPLE…RQLS, and EKRL…SDSG. Residues 285 to 298 are compositionally biased toward low complexity; sequence TTTPTPTAILAPGS. Phosphoserine occurs at positions 298, 301, and 305. Residues 316–332 are compositionally biased toward basic and acidic residues; the sequence is MRRESGRPIKPPRKDLP. The Bromo 2 domain occupies 344-453; that stretch reads GKLSEQLKHC…DVFEFRYAKM (110 aa). The segment covering 481–515 has biased composition (acidic residues); sequence SSEESSSESSSEEDEEEDEEEEEEEEESESSDSEE. The segment covering 545–567 has biased composition (basic residues); it reads KPKRKREKKEKKKKRKAEKHRGR. Residues 556 to 560 carry the Nuclear localization signal motif; that stretch reads KKKRK. The NET domain occupies 634–716; sequence DSEEEEESRP…SCLRKKPRKP (83 aa). S635 carries the phosphoserine modification. Over residues 641 to 652 the composition is skewed to basic and acidic residues; it reads SRPMSYDEKRQL. Residues 777–797 are compositionally biased toward low complexity; the sequence is SASSSSSDSSSSSSSSSSSDT.

This sequence belongs to the BET family. In terms of assembly, homodimer. Interacts with E2F1. Interacts with (acetylated) STAT3; promoting STAT3 recruitment to chromatin. Interacts with CTCF; promoting BRD2 recruitment to chromatin.

The protein localises to the nucleus. Its subcellular location is the chromosome. Functionally, chromatin reader protein that specifically recognizes and binds histone H4 acetylated at 'Lys-5' and 'Lys-12' (H4K5ac and H4K12ac, respectively), thereby controlling gene expression and remodeling chromatin structures. Recruits transcription factors and coactivators to target gene sites, and activates RNA polymerase II machinery for transcriptional elongation. Plays a key role in genome compartmentalization via its association with CTCF and cohesin: recruited to chromatin by CTCF and promotes formation of topologically associating domains (TADs) via its ability to bind acetylated histones, contributing to CTCF boundary formation and enhancer insulation. Also recognizes and binds acetylated non-histone proteins, such as STAT3. Involved in inflammatory response by regulating differentiation of naive CD4(+) T-cells into T-helper Th17: recognizes and binds STAT3 acetylated at 'Lys-87', promoting STAT3 recruitment to chromatin. In addition to acetylated lysines, also recognizes and binds lysine residues on histones that are both methylated and acetylated on the same side chain to form N6-acetyl-N6-methyllysine (Kacme), an epigenetic mark of active chromatin associated with increased transcriptional initiation. Specifically binds histone H4 acetyl-methylated at 'Lys-5' and 'Lys-12' (H4K5acme and H4K12acme, respectively). This chain is Bromodomain-containing protein 2 (BRD2), found in Canis lupus familiaris (Dog).